The following is a 185-amino-acid chain: Peptidyl-tRNA hydrolase (185 aa).

Tyr14 is a tRNA binding site. The active-site Proton acceptor is His19. The tRNA site is built by Phe64, Asn66, and Asn112.

This sequence belongs to the PTH family. In terms of assembly, monomer.

It localises to the cytoplasm. It carries out the reaction an N-acyl-L-alpha-aminoacyl-tRNA + H2O = an N-acyl-L-amino acid + a tRNA + H(+). Hydrolyzes ribosome-free peptidyl-tRNAs (with 1 or more amino acids incorporated), which drop off the ribosome during protein synthesis, or as a result of ribosome stalling. Its function is as follows. Catalyzes the release of premature peptidyl moieties from peptidyl-tRNA molecules trapped in stalled 50S ribosomal subunits, and thus maintains levels of free tRNAs and 50S ribosomes. This chain is Peptidyl-tRNA hydrolase, found in Lactobacillus gasseri (strain ATCC 33323 / DSM 20243 / BCRC 14619 / CIP 102991 / JCM 1131 / KCTC 3163 / NCIMB 11718 / NCTC 13722 / AM63).